The following is a 232-amino-acid chain: Orotate phosphoribosyltransferase (232 aa).

5-phospho-alpha-D-ribose 1-diphosphate contacts are provided by residues arginine 107, lysine 108, lysine 111, and 133–141; that span reads EDLTTDGGS. Threonine 137 serves as a coordination point for orotate.

This sequence belongs to the purine/pyrimidine phosphoribosyltransferase family. PyrE subfamily. As to quaternary structure, homodimer. The cofactor is Mg(2+).

The enzyme catalyses orotidine 5'-phosphate + diphosphate = orotate + 5-phospho-alpha-D-ribose 1-diphosphate. Its pathway is pyrimidine metabolism; UMP biosynthesis via de novo pathway; UMP from orotate: step 1/2. Catalyzes the transfer of a ribosyl phosphate group from 5-phosphoribose 1-diphosphate to orotate, leading to the formation of orotidine monophosphate (OMP). The polypeptide is Orotate phosphoribosyltransferase (Cereibacter sphaeroides (strain ATCC 17029 / ATH 2.4.9) (Rhodobacter sphaeroides)).